The following is a 444-amino-acid chain: Zeaxanthin 4-ketolase (444 aa).

The segment at 408–444 is disordered; it reads VAGGSSSGGGGEGGKPGAGEHGLLQRQRQLAPVGVMA. Residues 412-427 are compositionally biased toward gly residues; that stretch reads SSSGGGGEGGKPGAGE.

The enzyme catalyses all-trans-adonixanthin + 2 AH2 + 2 O2 = all-trans-(3S,3'S)-astaxanthin + 2 A + 3 H2O. The catalysed reaction is all-trans-zeaxanthin + 2 AH2 + 2 O2 = all-trans-adonixanthin + 2 A + 3 H2O. It carries out the reaction echinenone + 2 AH2 + 2 O2 = canthaxanthin + 2 A + 3 H2O. It catalyses the reaction all-trans-beta-carotene + 2 AH2 + 2 O2 = echinenone + 2 A + 3 H2O. It functions in the pathway carotenoid biosynthesis; astaxanthin biosynthesis. Its function is as follows. Involved in the biosynthesis of ketocarotenoids which are powerful anti-oxidative molecules. Catalyzes the conversion of zeaxanthin to astaxanthin via adonixanthin. Catalyzes the conversion of beta-carotene to canthaxanthin via echinenone. This chain is Zeaxanthin 4-ketolase, found in Chlamydomonas reinhardtii (Chlamydomonas smithii).